The following is a 173-amino-acid chain: Small ribosomal subunit protein uS7 (173 aa).

This sequence belongs to the universal ribosomal protein uS7 family. As to quaternary structure, part of the 30S ribosomal subunit. Contacts proteins S9 and S11.

One of the primary rRNA binding proteins, it binds directly to 16S rRNA where it nucleates assembly of the head domain of the 30S subunit. Is located at the subunit interface close to the decoding center, probably blocks exit of the E-site tRNA. In Orientia tsutsugamushi (strain Boryong) (Rickettsia tsutsugamushi), this protein is Small ribosomal subunit protein uS7.